The chain runs to 1203 residues: Protein patched homolog 2 (1203 aa).

Topologically, residues 1 to 57 (MTRSPPLRELPPSYTPPARTAAPQILAGSLKAPLWLRAYFQGLLFSLGCGIQRHCGK) are cytoplasmic. The helical transmembrane segment at 58 to 78 (VLFLGLLAFGALALGLRMAII) threads the bilayer. At 79 to 392 (ETNLEQLWVE…LDDILHAFSE (314 aa)) the chain is on the extracellular side. Residue N370 is glycosylated (N-linked (GlcNAc...) asparagine). The chain crosses the membrane as a helical span at residues 393 to 413 (VSAARVVGGYLLMLAYACVTM). Positions 394 to 552 (SAARVVGGYL…MLVFPAILSL (159 aa)) constitute an SSD domain. Over 414-428 (LRWDCAQSQGSVGLA) the chain is Cytoplasmic. The helical transmembrane segment at 429–449 (GVLLVALAVASGLGLCALLGI) threads the bilayer. The Extracellular portion of the chain corresponds to 450 to 457 (TFNAATTQ). A helical transmembrane segment spans residues 458-478 (VLPFLALGIGVDDVFLLAHAF). Residues 479-501 (TEALPGTPLQERMGECLQRTGTS) are Cytoplasmic-facing. Residues 502–522 (VVLTSINNMAAFLMAALVPIP) form a helical membrane-spanning segment. Topologically, residues 523–531 (ALRAFSLQA) are extracellular. The helical transmembrane segment at 532–552 (AIVVGCTFVAVMLVFPAILSL) threads the bilayer. Over 553-686 (DLRRRHCQRL…APLLLQSHAK (134 aa)) the chain is Cytoplasmic. A helical transmembrane segment spans residues 687–707 (AIVLVLFGALLGLSLYGATLV). Topologically, residues 708-963 (QDGLALTDVV…WEQYLGLRRC (256 aa)) are extracellular. Residue N812 is glycosylated (N-linked (GlcNAc...) asparagine). Residues 964-984 (FLLAVCILLVCTFLVCALLLL) form a helical membrane-spanning segment. Residues 985–991 (NPWTAGL) lie on the Cytoplasmic side of the membrane. The helical transmembrane segment at 992–1012 (IVLVLAMMTVELFGIMGFLGI) threads the bilayer. Position 1013 (K1013) is a topological domain, extracellular. Residues 1014-1034 (LSAIPVVILVASVGIGVEFTV) traverse the membrane as a helical segment. Residues 1035–1064 (HVALGFLTTQGSRNLRAAHALEHTFAPVTD) are Cytoplasmic-facing. A helical transmembrane segment spans residues 1065–1085 (GAISTLLGLLMLAGSHFDFIV). Residues 1086 to 1093 (RYFFAALT) are Extracellular-facing. A helical transmembrane segment spans residues 1094–1114 (VLTLLGLLHGLVLLPVLLSIL). The Cytoplasmic portion of the chain corresponds to 1115–1203 (GPPPEVIQMY…SSRGPGPATG (89 aa)). The interval 1171–1203 (GAYIHPAPDEPPWSPAATSSGNLSSRGPGPATG) is disordered. Residues 1186-1195 (AATSSGNLSS) are compositionally biased toward polar residues.

This sequence belongs to the patched family.

It is found in the membrane. Functionally, plays a role in the control of cellular growth. May have a role in epidermal development. May act as a receptor for Sonic hedgehog (SHH). This Homo sapiens (Human) protein is Protein patched homolog 2 (PTCH2).